The primary structure comprises 459 residues: U1 small nuclear ribonucleoprotein 70 kDa (459 aa).

Residues 99–178 (KTIFVSRISY…RRIVVDIERG (80 aa)) form the RRM domain. The tract at residues 185–459 (KPRKFGGGLG…YSMISNENGF (275 aa)) is disordered. Over residues 211–241 (EMSESREKEKEREKEKEKEKERMEKMKKRDG) the composition is skewed to basic and acidic residues. Low complexity predominate over residues 242–254 (GLSSNGNRSNGIS). Positions 263 to 408 (DRGDRGDRDR…IDERRRDQRD (146 aa)) are enriched in basic and acidic residues. Residues 426–440 (QHHHHQQNHQSHHNQ) show a composition bias toward basic residues.

The protein resides in the nucleus. In terms of biological role, mediates the splicing of pre-mRNA by binding to the stem loop I region of U1-snRNA. This is U1 small nuclear ribonucleoprotein 70 kDa (snrnp70) from Dictyostelium discoideum (Social amoeba).